The following is a 21-amino-acid chain: Agglutinin beta-1 chain (21 aa).

The span at Asn1–Ile10 shows a compositional bias: polar residues. A disordered region spans residues Asn1 to Asn21.

This sequence belongs to the jacalin lectin family. In terms of assembly, formed of four alpha chains and four beta chains.

In terms of biological role, D-galactose-specific lectin, binds the T-antigen structure Gal-beta1,3-GalNAc. This chain is Agglutinin beta-1 chain, found in Maclura pomifera (Osage orange).